The primary structure comprises 315 residues: Olfactory receptor 3A1 (315 aa).

At 1 to 28 (MQPESGANGTVIAEFILLGLLEAPGLQP) the chain is on the extracellular side. An N-linked (GlcNAc...) asparagine glycan is attached at Asn-8. Residues 29 to 52 (VVFVLFLFAYLVTVRGNLSILAAV) form a helical membrane-spanning segment. Residues 53 to 60 (LVEPKLHT) are Cytoplasmic-facing. A helical membrane pass occupies residues 61 to 82 (PMYFFLGNLSVLDVGCISVTVP). Residues 83 to 103 (SMLSRLLSRKRAVPCGACLTQ) lie on the Extracellular side of the membrane. Cys-100 and Cys-192 are joined by a disulfide. Residues 104–123 (LFFFHLFVGVDCFLLTAMAY) form a helical membrane-spanning segment. At 124 to 143 (DRFLAICRPLTYSTRMSQTV) the chain is on the cytoplasmic side. Residues 144–161 (QRMLVAASWACAFTNALT) traverse the membrane as a helical segment. Residues 162–199 (HTVAMSTLNFCGPNVINHFYCDLPQLFQLSCSSTQLNE) lie on the Extracellular side of the membrane. A helical transmembrane segment spans residues 200-223 (LLLFAVGFIMAGTPMALIVISYIH). The Cytoplasmic segment spans residues 224 to 240 (VAAAVLRIRSVEGRKKA). A helical membrane pass occupies residues 241–264 (FSTCGSHLTVVAIFYGSGIFNYMR). Over 265–275 (LGSTKLSDKDK) the chain is Extracellular. Residues 276–295 (AVGIFNTVINPMLNPIIYSF) form a helical membrane-spanning segment. Topologically, residues 296-315 (RNPDVQSAIWRMLTGRRSLA) are cytoplasmic.

Belongs to the G-protein coupled receptor 1 family.

The protein resides in the cell membrane. In terms of biological role, odorant receptor. This is Olfactory receptor 3A1 (OR3A1) from Homo sapiens (Human).